Reading from the N-terminus, the 116-residue chain is UPF0102 protein ELI_05985 (116 aa).

It belongs to the UPF0102 family.

The polypeptide is UPF0102 protein ELI_05985 (Erythrobacter litoralis (strain HTCC2594)).